A 243-amino-acid chain; its full sequence is 2-O-methyltransferase NoeI (243 aa).

This sequence belongs to the FkbM methyltransferase family.

The protein resides in the cytoplasm. Functionally, required for 2-O-methylation of the fucosyl group of Nod factors. The chain is 2-O-methyltransferase NoeI (noeI) from Sinorhizobium fredii (strain NBRC 101917 / NGR234).